Here is a 474-residue protein sequence, read N- to C-terminus: Probable multidrug resistance protein NorM (474 aa).

12 helical membrane-spanning segments follow: residues 33–50 (LWLA…IAMM), 65–87 (VAAA…GLVS), 108–130 (SLRV…QLYG), 150–172 (YLDG…GLMG), 179–201 (PALW…LIHG), 211–233 (FGAG…VVCV), 258–280 (LLQL…GAAA), 295–317 (QIAL…AATV), 334–356 (AGFA…VALT), 376–398 (TLTA…QVVA), 410–432 (VPLL…VLGF), and 436–458 (LGPF…LLVW).

The protein belongs to the multi antimicrobial extrusion (MATE) (TC 2.A.66.1) family.

The protein localises to the cell inner membrane. Functionally, multidrug efflux pump. The chain is Probable multidrug resistance protein NorM (norM) from Rhodopseudomonas palustris (strain ATCC BAA-98 / CGA009).